The following is a 196-amino-acid chain: Adenylate kinase (196 aa).

10–15 (GAGKGT) serves as a coordination point for ATP. The tract at residues 30-59 (STGDMLRAAVSAGTEIGKRAKAVMDAGGLV) is NMP. AMP is bound by residues Thr-31, Arg-36, 57 to 59 (GLV), 85 to 88 (GYPR), and Gln-92. An LID region spans residues 126 to 142 (NRVAETIAAGGTVRSDD). Arg-127 contributes to the ATP binding site. Arg-139 and Arg-150 together coordinate AMP. Ala-178 is an ATP binding site.

Belongs to the adenylate kinase family. As to quaternary structure, monomer.

The protein resides in the cytoplasm. It carries out the reaction AMP + ATP = 2 ADP. The protein operates within purine metabolism; AMP biosynthesis via salvage pathway; AMP from ADP: step 1/1. Catalyzes the reversible transfer of the terminal phosphate group between ATP and AMP. Plays an important role in cellular energy homeostasis and in adenine nucleotide metabolism. The protein is Adenylate kinase of Agrobacterium fabrum (strain C58 / ATCC 33970) (Agrobacterium tumefaciens (strain C58)).